The following is a 69-amino-acid chain: Protein transport protein Sec61 subunit gamma-3 (69 aa).

At Met1 the chain carries N-acetylmethionine. At 1-32 (MEAIDSAIDPLRDFAKSSVRLVQRCHKPDRKE) the chain is on the cytoplasmic side. Residues 33 to 61 (FTKVAVRTAIGFVVMGFVGFFVKLVFIPI) traverse the membrane as a helical segment. Residues 62-69 (NNIIVGSS) lie on the Extracellular side of the membrane.

Belongs to the SecE/SEC61-gamma family. As to quaternary structure, heterotrimeric complex composed of SEC61-alpha, SEC61-beta and SEC61-gamma.

It localises to the endoplasmic reticulum membrane. Functionally, necessary for protein translocation in the endoplasmic reticulum. In Arabidopsis thaliana (Mouse-ear cress), this protein is Protein transport protein Sec61 subunit gamma-3 (SEC61G3).